Here is a 154-residue protein sequence, read N- to C-terminus: NADPH-dependent 7-cyano-7-deazaguanine reductase (154 aa).

Residues 1-23 are compositionally biased toward polar residues; the sequence is MPNTDVSSLSMLGQQTETAQSPE. Positions 1-26 are disordered; sequence MPNTDVSSLSMLGQQTETAQSPEQAV. Cys-52 serves as the catalytic Thioimide intermediate. Asp-59 serves as the catalytic Proton donor. Substrate is bound by residues 74–76 and 93–94; these read VES and HE.

It belongs to the GTP cyclohydrolase I family. QueF type 1 subfamily.

The protein resides in the cytoplasm. It carries out the reaction 7-aminomethyl-7-carbaguanine + 2 NADP(+) = 7-cyano-7-deazaguanine + 2 NADPH + 3 H(+). It participates in tRNA modification; tRNA-queuosine biosynthesis. Catalyzes the NADPH-dependent reduction of 7-cyano-7-deazaguanine (preQ0) to 7-aminomethyl-7-deazaguanine (preQ1). The protein is NADPH-dependent 7-cyano-7-deazaguanine reductase of Rhizobium leguminosarum bv. trifolii (strain WSM2304).